The chain runs to 627 residues: Glutamine--fructose-6-phosphate aminotransferase [isomerizing] (627 aa).

The Nucleophile; for GATase activity role is filled by C2. The 223-residue stretch at 2–224 folds into the Glutamine amidotransferase type-2 domain; it reads CGIVGYIGTQ…NGEIARLTPL (223 aa). SIS domains are found at residues 293 to 442 and 476 to 617; these read LPEN…HRQT and LAHE…VDQP. K622 (for Fru-6P isomerization activity) is an active-site residue.

In terms of assembly, homodimer.

The protein localises to the cytoplasm. The enzyme catalyses D-fructose 6-phosphate + L-glutamine = D-glucosamine 6-phosphate + L-glutamate. Catalyzes the first step in hexosamine metabolism, converting fructose-6P into glucosamine-6P using glutamine as a nitrogen source. The polypeptide is Glutamine--fructose-6-phosphate aminotransferase [isomerizing] (Nostoc sp. (strain PCC 9229)).